Reading from the N-terminus, the 528-residue chain is MDARALWQRYQNWLYFHEGLGLYLDISRMRFDDAFVESLQPKFDKAFADMAELEKGAIANPDENRMVGHYWLRNPDLAPTPELTQEIVQTLEQIEAFAEKVQTGAIHPPRASRFTDIISIGIGGSALGPQFVAEALAPDFPPLKIHFIDNNDPAGIDRVLNHLRNSLASTLVLVISKSGGTPEPRNGMIEVKKAYAGHNLEFAQYAVAITSVDSNLDKLAKDEGWLARFPMYDWVGGRTSEMSAVGLVPAALQGIDVRAMLDGAKEMDDATRVPDVKNNPAALLALSWYFAGNGKGEKDMVVLPYKDSLFLFSRYLQQLVMESLGKEKDLDGNVVHQGIAVYGNKGSTDQHAYVQQLREGVANFFATFVEVLEDRQGPSTEIDPGVTSGDYLSGFLQGTRQALYENHRDSITVTIPQVNPRTVGALIALYERAVGLYASLVNVNAYHQPGVEAGKKAAASILDLQTRVVAVLQKEKTPISLDELAKKAGASDQIEAIYKILRHIHANQRGVVLQGDLHKPGSLTVSAS.

Glutamate 322 serves as the catalytic Proton donor. Residues histidine 351 and lysine 455 contribute to the active site.

Belongs to the GPI family.

It localises to the cytoplasm. The catalysed reaction is alpha-D-glucose 6-phosphate = beta-D-fructose 6-phosphate. It functions in the pathway carbohydrate biosynthesis; gluconeogenesis. Its pathway is carbohydrate degradation; glycolysis; D-glyceraldehyde 3-phosphate and glycerone phosphate from D-glucose: step 2/4. Functionally, catalyzes the reversible isomerization of glucose-6-phosphate to fructose-6-phosphate. This Nostoc punctiforme (strain ATCC 29133 / PCC 73102) protein is Glucose-6-phosphate isomerase.